Reading from the N-terminus, the 56-residue chain is Putative 2-Cys peroxiredoxin BAS1 (56 aa).

This sequence belongs to the peroxiredoxin family. AhpC/Prx1 subfamily. As to quaternary structure, homodimer; disulfide-linked, upon oxidation.

Its subcellular location is the plastid. It localises to the chloroplast. It catalyses the reaction a hydroperoxide + [thioredoxin]-dithiol = an alcohol + [thioredoxin]-disulfide + H2O. Thiol-specific peroxidase that catalyzes the reduction of hydrogen peroxide and organic hydroperoxides to water and alcohols, respectively. Plays a role in cell protection against oxidative stress by detoxifying peroxides. May be an antioxidant enzyme particularly in the developing shoot and photosynthesizing leaf. The sequence is that of Putative 2-Cys peroxiredoxin BAS1 from Pinus strobus (Eastern white pine).